Reading from the N-terminus, the 780-residue chain is E3 SUMO-protein ligase gei-17 (780 aa).

The disordered stretch occupies residues 181-210; that stretch reads APLHSSFPNHGRSSQQSLQKSEKSNRPKKM. The region spanning 203–367 is the PINIT domain; the sequence is KSNRPKKMYA…AAGVYFVHRV (165 aa). The SP-RING-type zinc finger occupies 400-485; it reads GEDDIAMDRL…LAKVDKNTTE (86 aa). Zn(2+) is bound by residues Cys431, His433, Cys454, and Cys457. Over residues 519–530 the composition is skewed to polar residues; it reads GTASCSSTNGNG. Disordered stretches follow at residues 519 to 544, 560 to 594, and 732 to 755; these read GTAS…ADDD, IMNS…KTKD, and QQHH…SFYA. Residues 732–749 show a composition bias toward low complexity; the sequence is QQHHLQQQQQQQQSPQIM.

This sequence belongs to the PIAS family. May interact with gex-3.

It functions in the pathway protein modification; protein sumoylation. Its function is as follows. Functions as an E3-type smo-1 ligase. Mediates smo-1 conjugation to air-2 in vitro and is required for proper chromosome alignment. In the early embryo, specifically suppresses checkpoint activation in response to DNA damage, maybe by promoting mus-101 sumoylation. In embryos, plays a role in determining telomere localization in the nucleus. Acts with pie-1 to promote piRNA-mediated silencing and fertility in the adult germline. In Caenorhabditis elegans, this protein is E3 SUMO-protein ligase gei-17.